Reading from the N-terminus, the 248-residue chain is MEMPIIKLKNFDGPFDLLLHLIKKNEMSITEIKIHEITKQYLEYIALMKELDLEITSEFIVMAATLIEIKSKSLLPKVKVEDETCEEDLQKILMEKLQEYKKFKKISAYLRERELSTGEVFTKKAEIIEVEVDNKLDDDYFKNITMLDLYKLYNNLMRIYGEKQNVNVMEKKISVDKYKITDKINFLRDKLSEKSIVRFSEFIPQCECKLEVVVTFMAMLELIKRSEIKVVQYENFGEIMMEKVIVNE.

This sequence belongs to the ScpA family. As to quaternary structure, component of a cohesin-like complex composed of ScpA, ScpB and the Smc homodimer, in which ScpA and ScpB bind to the head domain of Smc. The presence of the three proteins is required for the association of the complex with DNA.

The protein localises to the cytoplasm. Functionally, participates in chromosomal partition during cell division. May act via the formation of a condensin-like complex containing Smc and ScpB that pull DNA away from mid-cell into both cell halves. The polypeptide is Segregation and condensation protein A (Clostridium perfringens (strain ATCC 13124 / DSM 756 / JCM 1290 / NCIMB 6125 / NCTC 8237 / Type A)).